The sequence spans 115 residues: Transcription initiation factor IIA subunit 2 (115 aa).

This sequence belongs to the TFIIA subunit 2 family. As to quaternary structure, TFIIA is a heterodimer of the large unprocessed subunit 1 and a small subunit gamma.

The protein localises to the nucleus. Its function is as follows. TFIIA is a component of the transcription machinery of RNA polymerase II and plays an important role in transcriptional activation. TFIIA in a complex with tbp mediates transcriptional activity. The sequence is that of Transcription initiation factor IIA subunit 2 (gtf2a2) from Dictyostelium discoideum (Social amoeba).